A 380-amino-acid chain; its full sequence is Glucose ABC transporter permease protein TsgB13 (380 aa).

10 helical membrane passes run 20–40 (GTPVLTVLAALAVGGVALVAL), 59–81 (QFGLTEVLVRAVPLILAGLAVYL), 94–114 (GQLLLGALAGTWVAVNVSLPA), 115–135 (VALLPLMFLAACVAGAFWAGI), 148–166 (IITSLLLTFVAQELQSYLL), 202–222 (IPLFADVHAGLLVAVAAVVAT), 255–275 (VYLFVFLLGGAFAALGGIAEI), 282–301 (FRAAFAPGYGFTAIPIALLG), 305–325 (AVKVTLAGLFFAVLFVGGSSV), and 328–348 (AFGVPAALVEIIQALVILFLI).

This sequence belongs to the binding-protein-dependent transport system permease family. The complex is composed of two ATP-binding proteins (TsgD13), two transmembrane proteins (TsgB13 and TsgC13) and a solute-binding protein (TsgA13).

Its subcellular location is the cell membrane. In terms of biological role, part of an ABC transporter complex involved in glucose import. Responsible for the translocation of the substrate across the membrane. The protein is Glucose ABC transporter permease protein TsgB13 (tsgB13) of Haloferax volcanii (strain ATCC 29605 / DSM 3757 / JCM 8879 / NBRC 14742 / NCIMB 2012 / VKM B-1768 / DS2) (Halobacterium volcanii).